The sequence spans 83 residues: Small ribosomal subunit protein bS16 (83 aa).

It belongs to the bacterial ribosomal protein bS16 family.

In Borrelia turicatae (strain 91E135), this protein is Small ribosomal subunit protein bS16.